Here is a 236-residue protein sequence, read N- to C-terminus: Biosynthetic peptidoglycan transglycosylase (236 aa).

A helical transmembrane segment spans residues 12–31; the sequence is ALLWFAASSIVLVLVFRWVP.

It belongs to the glycosyltransferase 51 family.

The protein resides in the cell inner membrane. The catalysed reaction is [GlcNAc-(1-&gt;4)-Mur2Ac(oyl-L-Ala-gamma-D-Glu-L-Lys-D-Ala-D-Ala)](n)-di-trans,octa-cis-undecaprenyl diphosphate + beta-D-GlcNAc-(1-&gt;4)-Mur2Ac(oyl-L-Ala-gamma-D-Glu-L-Lys-D-Ala-D-Ala)-di-trans,octa-cis-undecaprenyl diphosphate = [GlcNAc-(1-&gt;4)-Mur2Ac(oyl-L-Ala-gamma-D-Glu-L-Lys-D-Ala-D-Ala)](n+1)-di-trans,octa-cis-undecaprenyl diphosphate + di-trans,octa-cis-undecaprenyl diphosphate + H(+). It participates in cell wall biogenesis; peptidoglycan biosynthesis. Its function is as follows. Peptidoglycan polymerase that catalyzes glycan chain elongation from lipid-linked precursors. This Pseudomonas putida (strain GB-1) protein is Biosynthetic peptidoglycan transglycosylase.